Reading from the N-terminus, the 1128-residue chain is Membrane-associated guanylate kinase, WW and PDZ domain-containing protein 3 (1128 aa).

In terms of domain architecture, PDZ 1 spans 22–108; that stretch reads WGGPAGPDPE…PVRLKTVRPG (87 aa). Residues 116–290 enclose the Guanylate kinase-like domain; that stretch reads RHYLSLQFQK…SMDFRNYMSR (175 aa). 123–130 contributes to the ATP binding site; the sequence is FQKGSIDH. Residues 184-276 are disordered; the sequence is TYDGNFYGTP…DWMKPVPSYN (93 aa). Positions 193–204 are enriched in pro residues; that stretch reads PKPPAEPSPFQP. The span at 238 to 247 shows a compositional bias: acidic residues; sequence LPEDEEEEEK. Residues 257–267 are compositionally biased toward basic and acidic residues; that stretch reads ENKEKHSDSSD. 2 consecutive WW domains span residues 295–328 and 341–374; these read EPLP…DPRL and GELP…NPVL. PDZ domains lie at 412-494 and 581-657; these read RTSL…TLCR and TIPL…LILR. Positions 658–688 are disordered; the sequence is GGPPSPTKTGKMKDKQESSGSLEALSDAIPQ. PDZ domains lie at 728 to 810 and 852 to 939; these read DVFL…TVRR and DVCL…VAEE. Disordered regions lie at residues 939–985 and 999–1018; these read EEHR…GKEV and LAQP…SQAQ. 2 stretches are compositionally biased toward polar residues: residues 946 to 956 and 965 to 974; these read SGTNSAKQSPA and AQSSASSTDR. Positions 1024–1106 constitute a PDZ 6 domain; the sequence is PVELERGPRG…KVLLLLRPGT (83 aa).

Belongs to the MAGUK family.

The protein resides in the cell membrane. It is found in the cell junction. It localises to the tight junction. In terms of biological role, acts as a scaffolding protein at cell-cell junctions, thereby regulating various cellular and signaling processes. This is Membrane-associated guanylate kinase, WW and PDZ domain-containing protein 3 (MAGI3) from Gallus gallus (Chicken).